Here is a 399-residue protein sequence, read N- to C-terminus: Beta sliding clamp (399 aa).

It belongs to the beta sliding clamp family. Forms a ring-shaped head-to-tail homodimer around DNA which binds and tethers DNA polymerases and other proteins to the DNA. The DNA replisome complex has a single clamp-loading complex (3 tau and 1 each of delta, delta', psi and chi subunits) which binds 3 Pol III cores (1 core on the leading strand and 2 on the lagging strand) each with a beta sliding clamp dimer. Additional proteins in the replisome are other copies of gamma, psi and chi, Ssb, DNA helicase and RNA primase.

Its subcellular location is the cytoplasm. Confers DNA tethering and processivity to DNA polymerases and other proteins. Acts as a clamp, forming a ring around DNA (a reaction catalyzed by the clamp-loading complex) which diffuses in an ATP-independent manner freely and bidirectionally along dsDNA. Initially characterized for its ability to contact the catalytic subunit of DNA polymerase III (Pol III), a complex, multichain enzyme responsible for most of the replicative synthesis in bacteria; Pol III exhibits 3'-5' exonuclease proofreading activity. The beta chain is required for initiation of replication as well as for processivity of DNA replication. This is Beta sliding clamp (dnaN) from Mycobacterium leprae (strain TN).